Reading from the N-terminus, the 405-residue chain is Riboflavin biosynthesis protein RibBA (405 aa).

A DHBP synthase region spans residues 1–205; that stretch reads MEQIKLDSIA…IKDLIEYRLT (205 aa). Residues 30-31, D35, 144-148, and E168 contribute to the D-ribulose 5-phosphate site; these read RE and RVGHT. Mg(2+) is bound at residue E31. H147 provides a ligand contact to Mg(2+). Residues 206–405 are GTP cyclohydrolase II; it reads HESLVKREIG…KMGHTILKKD (200 aa). 256 to 260 provides a ligand contact to GTP; sequence RVHSS. The Zn(2+) site is built by C261, C272, and C274. Residues Q277, 299–301, and T321 each bind GTP; that span reads EGR. D333 (proton acceptor; for GTP cyclohydrolase activity) is an active-site residue. R335 (nucleophile; for GTP cyclohydrolase activity) is an active-site residue. Residues T356 and K361 each contribute to the GTP site.

This sequence in the N-terminal section; belongs to the DHBP synthase family. In the C-terminal section; belongs to the GTP cyclohydrolase II family. It depends on Mg(2+) as a cofactor. Mn(2+) serves as cofactor. The cofactor is Zn(2+).

The catalysed reaction is D-ribulose 5-phosphate = (2S)-2-hydroxy-3-oxobutyl phosphate + formate + H(+). It carries out the reaction GTP + 4 H2O = 2,5-diamino-6-hydroxy-4-(5-phosphoribosylamino)-pyrimidine + formate + 2 phosphate + 3 H(+). It functions in the pathway cofactor biosynthesis; riboflavin biosynthesis; 2-hydroxy-3-oxobutyl phosphate from D-ribulose 5-phosphate: step 1/1. The protein operates within cofactor biosynthesis; riboflavin biosynthesis; 5-amino-6-(D-ribitylamino)uracil from GTP: step 1/4. Its function is as follows. Catalyzes the conversion of D-ribulose 5-phosphate to formate and 3,4-dihydroxy-2-butanone 4-phosphate. Catalyzes the conversion of GTP to 2,5-diamino-6-ribosylamino-4(3H)-pyrimidinone 5'-phosphate (DARP), formate and pyrophosphate. In Cytophaga hutchinsonii (strain ATCC 33406 / DSM 1761 / CIP 103989 / NBRC 15051 / NCIMB 9469 / D465), this protein is Riboflavin biosynthesis protein RibBA.